We begin with the raw amino-acid sequence, 548 residues long: ADP,ATP carrier protein 1 (548 aa).

Transmembrane regions (helical) follow at residues 39-59 and 75-95; these read RPVF…YSVS and SIPY…VFSI. Asparagine 101 carries an N-linked (GlcNAc...) asparagine glycan. The next 8 membrane-spanning stretches (helical) occupy residues 107–127, 149–169, 171–191, 204–224, 239–259, 302–322, 350–370, and 374–394; these read VFSI…TVLM, MVFM…SWTS, LMYL…FFAL, FIPL…FSMK, LFFR…IYLI, LVLA…MVEA, IQLA…PALI, and GFLY…ASVF. 2 N-linked (GlcNAc...) asparagine glycosylation sites follow: asparagine 400 and asparagine 406. The chain crosses the membrane as a helical span at residues 410–430; sequence LGFVSIGENLWLEQLLGAIIV. Asparagine 488 carries N-linked (GlcNAc...) asparagine glycosylation. A helical transmembrane segment spans residues 494-514; that stretch reads KAAISSLTIVTVITACWGFAV.

It belongs to the ADP/ATP translocase tlc family.

Its subcellular location is the cell membrane. ATP transporter involved in the uptake of ATP from the host cell cytoplasm. Provides the microsporidian cell with host ATP in exchange for ADP. This is an obligate exchange system. This energy acquiring activity is an important component of microsporidian parasitism. This is ADP,ATP carrier protein 1 (ANC1) from Paranosema grylli (Microsporidian parasite).